The following is a 140-amino-acid chain: uncharacterized protein (140 aa).

This is an uncharacterized protein from Acanthamoeba polyphaga mimivirus (APMV).